Reading from the N-terminus, the 322-residue chain is MIQHLALDALQRHLAGSPLYGWATSLPAQISARIEEGHGDLARWWSAVQRLPQVPAPKVDLAQRFALHSDHDAALQAQMKEALQGLIPWRKGPFDFFGVQVDTEWRSDWKWERVSPHVELRGKRVLDVGCGNGYYQWRMLGAGAESVVGVDPNWLFLCQFLAAKRYLPELPAWHLPLALEDLPEKLEGFDTVFSMGVLYHRRSPIDHLLALKDCLKRGGELVLETLVVEGDASTVLVPEDRYAQMRNVWFLPSVAALELWLRRAGFADARCVDVSLTSVEEQRSTEWMRFQSLPEFLDPQDRSRTVEGLPAPMRATLVARKP.

Carboxy-S-adenosyl-L-methionine-binding positions include Lys91, Trp105, Lys110, Gly129, 179 to 180 (LE), Met195, Tyr199, and Arg314.

The protein belongs to the class I-like SAM-binding methyltransferase superfamily. CmoB family. As to quaternary structure, homotetramer.

The catalysed reaction is carboxy-S-adenosyl-L-methionine + 5-hydroxyuridine(34) in tRNA = 5-carboxymethoxyuridine(34) in tRNA + S-adenosyl-L-homocysteine + H(+). Catalyzes carboxymethyl transfer from carboxy-S-adenosyl-L-methionine (Cx-SAM) to 5-hydroxyuridine (ho5U) to form 5-carboxymethoxyuridine (cmo5U) at position 34 in tRNAs. This is tRNA U34 carboxymethyltransferase from Pseudomonas aeruginosa (strain ATCC 15692 / DSM 22644 / CIP 104116 / JCM 14847 / LMG 12228 / 1C / PRS 101 / PAO1).